The primary structure comprises 131 residues: Global transcriptional regulator Spx 2 (131 aa).

Residues cysteine 10 and cysteine 13 are joined by a disulfide bond.

It belongs to the ArsC family. Spx subfamily. Interacts with the C-terminal domain of the alpha subunit of the RNAP.

It localises to the cytoplasm. In terms of biological role, global transcriptional regulator that plays a key role in stress response and exerts either positive or negative regulation of genes. Acts by interacting with the C-terminal domain of the alpha subunit of the RNA polymerase (RNAP). This interaction can enhance binding of RNAP to the promoter region of target genes and stimulate their transcription, or block interaction of RNAP with activator. This chain is Global transcriptional regulator Spx 2, found in Bacillus anthracis.